A 271-amino-acid polypeptide reads, in one-letter code: Glutamate racemase (271 aa).

Substrate is bound by residues 12-13 (DS) and 44-45 (YG). The active-site Proton donor/acceptor is cysteine 75. 76 to 77 (NT) is a binding site for substrate. Cysteine 185 acts as the Proton donor/acceptor in catalysis. 186 to 187 (TH) is a substrate binding site.

This sequence belongs to the aspartate/glutamate racemases family.

The catalysed reaction is L-glutamate = D-glutamate. The protein operates within cell wall biogenesis; peptidoglycan biosynthesis. In terms of biological role, provides the (R)-glutamate required for cell wall biosynthesis. In Methylococcus capsulatus (strain ATCC 33009 / NCIMB 11132 / Bath), this protein is Glutamate racemase.